We begin with the raw amino-acid sequence, 281 residues long: Acetyl-coenzyme A carboxylase carboxyl transferase subunit beta (281 aa).

The region spanning 23 to 281 (IWTKCGSCQA…SLLVKLHYKN (259 aa)) is the CoA carboxyltransferase N-terminal domain. The Zn(2+) site is built by cysteine 27, cysteine 30, cysteine 46, and cysteine 49. A C4-type zinc finger spans residues 27–49 (CGSCQAVLYKSELEKLQEVCPKC).

Belongs to the AccD/PCCB family. Acetyl-CoA carboxylase is a heterohexamer composed of biotin carboxyl carrier protein (AccB), biotin carboxylase (AccC) and two subunits each of ACCase subunit alpha (AccA) and ACCase subunit beta (AccD). It depends on Zn(2+) as a cofactor.

The protein localises to the cytoplasm. It carries out the reaction N(6)-carboxybiotinyl-L-lysyl-[protein] + acetyl-CoA = N(6)-biotinyl-L-lysyl-[protein] + malonyl-CoA. It functions in the pathway lipid metabolism; malonyl-CoA biosynthesis; malonyl-CoA from acetyl-CoA: step 1/1. Its function is as follows. Component of the acetyl coenzyme A carboxylase (ACC) complex. Biotin carboxylase (BC) catalyzes the carboxylation of biotin on its carrier protein (BCCP) and then the CO(2) group is transferred by the transcarboxylase to acetyl-CoA to form malonyl-CoA. This Alteromonas mediterranea (strain DSM 17117 / CIP 110805 / LMG 28347 / Deep ecotype) protein is Acetyl-coenzyme A carboxylase carboxyl transferase subunit beta.